The sequence spans 239 residues: Probable 2-phosphosulfolactate phosphatase (239 aa).

This sequence belongs to the ComB family. Mg(2+) serves as cofactor.

It carries out the reaction (2R)-O-phospho-3-sulfolactate + H2O = (2R)-3-sulfolactate + phosphate. This is Probable 2-phosphosulfolactate phosphatase from Clostridium botulinum (strain Loch Maree / Type A3).